The primary structure comprises 155 residues: Lipoprotein signal peptidase (155 aa).

2 helical membrane-spanning segments follow: residues 52 to 72 (ILQGQMWFFYVITLVVIAGIV) and 85 to 105 (LGVALALMLGGAIGNFIDRVF). Residues D111 and D129 contribute to the active site. The helical transmembrane segment at 124 to 144 (IFNIADSSLCVGVILLFIQML) threads the bilayer.

This sequence belongs to the peptidase A8 family.

Its subcellular location is the cell membrane. The catalysed reaction is Release of signal peptides from bacterial membrane prolipoproteins. Hydrolyzes -Xaa-Yaa-Zaa-|-(S,diacylglyceryl)Cys-, in which Xaa is hydrophobic (preferably Leu), and Yaa (Ala or Ser) and Zaa (Gly or Ala) have small, neutral side chains.. The protein operates within protein modification; lipoprotein biosynthesis (signal peptide cleavage). Its function is as follows. This protein specifically catalyzes the removal of signal peptides from prolipoproteins. This Bacillus pumilus (strain SAFR-032) protein is Lipoprotein signal peptidase.